A 343-amino-acid chain; its full sequence is N(4)-bis(aminopropyl)spermidine synthase (343 aa).

Belongs to the branched-chain polyamine synthase family.

It localises to the cytoplasm. It carries out the reaction 2 S-adenosyl 3-(methylsulfanyl)propylamine + spermidine = N(4)-bis(aminopropyl)spermidine + 2 S-methyl-5'-thioadenosine + 2 H(+). It participates in amine and polyamine biosynthesis. Functionally, involved in the biosynthesis of branched-chain polyamines, which support the growth of thermophiles under high-temperature conditions. Catalyzes the sequential condensation of spermidine with the aminopropyl groups of decarboxylated S-adenosylmethionines to produce N(4)-bis(aminopropyl)spermidine via N(4)-aminopropylspermidine. This chain is N(4)-bis(aminopropyl)spermidine synthase, found in Thermus thermophilus.